The chain runs to 335 residues: Solute-binding protein Veis_3954 (335 aa).

A signal peptide spans 1–34; that stretch reads MPSTRPLPRPSSRSLRRLALGLGLAFGLGATAAA. (R)-pantoate contacts are provided by residues Gln50, Glu82, 155-158, Arg179, and Asn219; that span reads NGFR.

It belongs to the bacterial solute-binding protein 7 family. In terms of assembly, the complex is comprised of an extracytoplasmic solute-binding protein and a heteromeric permease formed by two transmembrane proteins.

It localises to the periplasm. Its function is as follows. Solute-binding protein that binds (R)-pantoate and D-erythronate (in vitro). Probably part of a tripartite ATP-independent periplasmic (TRAP) transport system that mediates solute transport into the cytoplasm. The polypeptide is Solute-binding protein Veis_3954 (Verminephrobacter eiseniae (strain EF01-2)).